We begin with the raw amino-acid sequence, 49 residues long: Unknown protein from spot 75 of 2D-PAGE of etiolated coleoptile (49 aa).

The sequence is that of Unknown protein from spot 75 of 2D-PAGE of etiolated coleoptile from Zea mays (Maize).